The chain runs to 43 residues: Defensin (43 aa).

3 disulfides stabilise this stretch: C3/C34, C20/C39, and C24/C41.

It is found in the secreted. Its function is as follows. Antibacterial peptide active against Gram-positive and Gram-negative bacteria. This is Defensin from Palomena prasina (Green shield bug).